Here is a 295-residue protein sequence, read N- to C-terminus: 4-diphosphocytidyl-2-C-methyl-D-erythritol kinase (295 aa).

The active site involves K22. 106–116 (PAGGGFGGGSS) contributes to the ATP binding site. Residue D148 is part of the active site.

The protein belongs to the GHMP kinase family. IspE subfamily.

It catalyses the reaction 4-CDP-2-C-methyl-D-erythritol + ATP = 4-CDP-2-C-methyl-D-erythritol 2-phosphate + ADP + H(+). Its pathway is isoprenoid biosynthesis; isopentenyl diphosphate biosynthesis via DXP pathway; isopentenyl diphosphate from 1-deoxy-D-xylulose 5-phosphate: step 3/6. Functionally, catalyzes the phosphorylation of the position 2 hydroxy group of 4-diphosphocytidyl-2C-methyl-D-erythritol. This is 4-diphosphocytidyl-2-C-methyl-D-erythritol kinase from Xanthomonas euvesicatoria pv. vesicatoria (strain 85-10) (Xanthomonas campestris pv. vesicatoria).